We begin with the raw amino-acid sequence, 86 residues long: Toxin Aam2 (86 aa).

The first 20 residues, 1-20 (MNYLITISLALLLMTGVASG), serve as a signal peptide directing secretion. The region spanning 22–84 (RDGYIADAGN…VPIKVPGKCN (63 aa)) is the LCN-type CS-alpha/beta domain. Disulfide bonds link cysteine 32–cysteine 83, cysteine 36–cysteine 56, cysteine 42–cysteine 66, and cysteine 46–cysteine 68. Asparagine 84 carries the asparagine amide modification.

It belongs to the long (4 C-C) scorpion toxin superfamily. Sodium channel inhibitor family. Alpha subfamily. Expressed by the venom gland.

The protein localises to the secreted. Functionally, alpha toxins bind voltage-independently at site-3 of sodium channels (Nav) and inhibit the inactivation of the activated channels, thereby blocking neuronal transmission. In Androctonus amoreuxi (African fattail scorpion), this protein is Toxin Aam2.